The following is a 142-amino-acid chain: Putative pre-16S rRNA nuclease (142 aa).

This sequence belongs to the YqgF nuclease family.

It localises to the cytoplasm. Functionally, could be a nuclease involved in processing of the 5'-end of pre-16S rRNA. In Malacoplasma penetrans (strain HF-2) (Mycoplasma penetrans), this protein is Putative pre-16S rRNA nuclease.